The following is a 462-amino-acid chain: Acetyl-CoA decarbonylase/synthase complex subunit gamma (462 aa).

The region spanning 1–60 (MAQLSAMDVYNLLPKANCGACGCKTCMEFATKLVNREAKPEDCPKLDDESLEKLQELLAP) is the 4Fe-4S domain. [4Fe-4S] cluster-binding residues include Cys18, Cys21, Cys26, and Cys43.

In terms of assembly, heterodimer of delta and gamma chains. The ACDS complex is made up of alpha, epsilon, beta, gamma and delta chains with a probable stoichiometry of (alpha(2)epsilon(2))(4)-beta(8)-(gamma(1)delta(1))(8). The cofactor is corrinoid. Requires [4Fe-4S] cluster as cofactor.

It carries out the reaction 5,6,7,8-tetrahydrosarcinapterin + methyl-Co(III)-[corrinoid Fe-S protein] = 5-methyltetrahydrosarcinapterin + Co(I)-[corrinoid Fe-S protein] + H(+). In terms of biological role, part of a complex that catalyzes the reversible cleavage of acetyl-CoA, allowing autotrophic growth from CO(2). The polypeptide is Acetyl-CoA decarbonylase/synthase complex subunit gamma (Methanopyrus kandleri (strain AV19 / DSM 6324 / JCM 9639 / NBRC 100938)).